The following is a 313-amino-acid chain: Solute carrier family 35 member E3 (313 aa).

Transmembrane regions (helical) follow at residues 14–34 (IIAG…INKW), 40–60 (GFPN…GLFI), 77–97 (ILLL…SLQS), 100–122 (IGTY…TMYY), 130–146 (IKLT…LNSY), 153–173 (LMGM…QVWV), 187–207 (LLYY…PFFE), 215–235 (IFGP…VIAF), 252–272 (TYNM…YVLF), and 275–295 (PLSL…LAYT).

Belongs to the TPT transporter family. SLC35E subfamily.

It is found in the membrane. Its function is as follows. Putative transporter. This Danio rerio (Zebrafish) protein is Solute carrier family 35 member E3 (slc35e3).